Consider the following 1046-residue polypeptide: Translation initiation factor IF-2 (1046 aa).

The tract at residues E49–G448 is disordered. Positions P52–R71 are enriched in low complexity. Over residues R94–L111 the composition is skewed to pro residues. Low complexity-rich tracts occupy residues P112–V139 and P147–P159. Residues A160–A176 are compositionally biased toward pro residues. Positions P177–P187 are enriched in low complexity. The segment covering P188 to P206 has biased composition (pro residues). Residues R210–G222 show a composition bias toward gly residues. The span at G223–A235 shows a compositional bias: pro residues. Low complexity predominate over residues S244–S253. 2 stretches are compositionally biased toward pro residues: residues S260–G281 and R304–P314. The segment covering P320–G333 has biased composition (low complexity). Over residues G334–G414 the composition is skewed to gly residues. The segment covering R415 to K426 has biased composition (basic residues). In terms of domain architecture, tr-type G spans A539 to D711. The interval G548–T555 is G1. G548–T555 serves as a coordination point for GTP. A G2 region spans residues G573–H577. The G3 stretch occupies residues D598–G601. GTP contacts are provided by residues D598 to H602 and N652 to D655. The segment at N652–D655 is G4. The segment at S688–R690 is G5.

Belongs to the TRAFAC class translation factor GTPase superfamily. Classic translation factor GTPase family. IF-2 subfamily.

The protein resides in the cytoplasm. Functionally, one of the essential components for the initiation of protein synthesis. Protects formylmethionyl-tRNA from spontaneous hydrolysis and promotes its binding to the 30S ribosomal subunits. Also involved in the hydrolysis of GTP during the formation of the 70S ribosomal complex. This chain is Translation initiation factor IF-2, found in Parafrankia sp. (strain EAN1pec).